Here is an 853-residue protein sequence, read N- to C-terminus: MSEGSGDQSQQRPWASPRQQPIKGIVQPRVLPPFGKPTRHTNKLDYIMTTVLKEAGKHKHVWPFQKPVDAVALCIPLYHERVARPMDLKTIENRLKSTYYTCAQECIDDIETVFQNCYTFNGKEDDVTIMAQNVHEVIKKSLEQAPREEHDMDVYWGKNKKKPAKSDGGSKSSSSKKNDARGPSEAPSEAGSEVSSVTTASAAAPTVSESASVAAKPERKVAGKKTGKRKAESEDDEKPEPLRAKREVAVVKKEVHQPLLPSMKPCLKLLNDFSTKKYQEFAWPFNEPVDAEQLGLHDYHKIIKEPMDLKSMKAKMESGAYKEPSDFEHDVRLMLRNCFLYNPVGDPVHSFGLRFQEVFDRRWAELGDSSSRASSVAPQSAPIAPTPKVAKSSAPKEPKESRKEHKKETTFEASGAKSEDLMQINNALSMIREREEKLKAELAAAQAIKDKLTSVKNRREDNPNEPFPEKLINETRALCTTQVGQNASSSSASSAALRNGRSKKAASARLYGYEFDSDDEDNKMALTYEEKRNLSNLINNLPNNQLNTIISIIQRRERSALMQQQLDDSEVELDFESLGDMCLREMGAFIKTIPTLNGNGDDEKPKTSSNPTSSGATGSKGSSSLESKNGKKKKNFNMSESSDDETSNSRKRRKRESSESQSSSSSDDDSDDEDRPSIPRKSGQPPSTSREWNQSSAPPPRMGGMGGQPPMSRVPASSSTSVSAIGKNNAAASSNSYQAPKPAPVPAPTSSRPPAAPRPPSKPKKTGGASILDTLLPDTFGASPPQFFQSQPTTSATIRSPTESQPGNGEDEQTRIQRMRMEAKRARQKEDEGSVSLSNQMEMMAAFEFDNTY.

The span at 1–19 (MSEGSGDQSQQRPWASPRQ) shows a compositional bias: polar residues. Disordered stretches follow at residues 1–22 (MSEG…QQPI) and 141–245 (SLEQ…LRAK). Positions 39–145 (RHTNKLDYIM…EVIKKSLEQA (107 aa)) constitute a Bromo 1 domain. Basic and acidic residues predominate over residues 141–153 (SLEQAPREEHDMD). Composition is skewed to low complexity over residues 166–175 (SDGGSKSSSS) and 192–215 (SEVS…SVAA). Residue K252 forms a Glycyl lysine isopeptide (Lys-Gly) (interchain with G-Cter in SUMO) linkage. The region spanning 257–366 (QPLLPSMKPC…EVFDRRWAEL (110 aa)) is the Bromo 2 domain. The segment covering 369–381 (SSSRASSVAPQSA) has biased composition (low complexity). Residues 369–418 (SSSRASSVAPQSAPIAPTPKVAKSSAPKEPKESRKEHKKETTFEASGAKS) form a disordered region. The segment covering 394–410 (APKEPKESRKEHKKETT) has biased composition (basic and acidic residues). Residues 419 to 458 (EDLMQINNALSMIREREEKLKAELAAAQAIKDKLTSVKNR) adopt a coiled-coil conformation. The NET domain occupies 516–601 (DSDDEDNKMA…TIPTLNGNGD (86 aa)). 2 disordered regions span residues 594 to 814 (PTLN…DEQT) and 819 to 838 (MRME…VSLS). Residues 612 to 624 (TSSGATGSKGSSS) are compositionally biased toward low complexity. Residues 684–696 (QPPSTSREWNQSS) show a composition bias toward polar residues. Low complexity predominate over residues 708–736 (QPPMSRVPASSSTSVSAIGKNNAAASSNS). Residues 786–807 (QFFQSQPTTSATIRSPTESQPG) show a composition bias toward polar residues. Residues 819–832 (MRMEAKRARQKEDE) show a composition bias toward basic and acidic residues.

The protein belongs to the BET family. As to quaternary structure, interacts with acetylated histone H4. Interacts (via BROMO domain 2) with smo-1 and ubc-9. In terms of tissue distribution, expressed in T-cells, Q-cells, V5-cells and their descendants such as somatic gonad and syncytium.

The protein resides in the nucleus. It localises to the chromosome. In terms of biological role, required for the establishment and maintenance of stable cell fate in several lineages including V5.pa, T, Z1/Z4 and QR lineages probably by repressing the expression of cell fate determinants. Required to maintain non-distal tip cell (DTC) fate of somatic gonadal cells through the htz-1-mediated repression of transcription factor ceh-22. Regulates the subnuclear localization of histone variant htz-1 in somatic gonadal cells. Plays a role in the attenuation of the let-60/ras pathway, probably by preventing expression of activators of the pathway. Involved in adult locomotion. Acts together with the sumoylation pathway to prevent muscle myosin depletion in aging adults probably by preventing myoblast growth factor receptor egl-15 overexpression. May play a role in vulva development. This chain is Bromodomain-containing protein bet-1, found in Caenorhabditis elegans.